The primary structure comprises 388 residues: Succinate--CoA ligase [ADP-forming] subunit beta (388 aa).

The ATP-grasp domain maps to 9-244; it reads KQLFKEFGLP…PSQDDAREAE (236 aa). Residues Lys-46, 53–55, Glu-99, Thr-102, and Glu-107 each bind ATP; that span reads GRG. Positions 199 and 213 each coordinate Mg(2+). Residues Asn-264 and 321-323 contribute to the substrate site; that span reads GIV.

Belongs to the succinate/malate CoA ligase beta subunit family. As to quaternary structure, heterotetramer of two alpha and two beta subunits. It depends on Mg(2+) as a cofactor.

The enzyme catalyses succinate + ATP + CoA = succinyl-CoA + ADP + phosphate. It catalyses the reaction GTP + succinate + CoA = succinyl-CoA + GDP + phosphate. Its pathway is carbohydrate metabolism; tricarboxylic acid cycle; succinate from succinyl-CoA (ligase route): step 1/1. Functionally, succinyl-CoA synthetase functions in the citric acid cycle (TCA), coupling the hydrolysis of succinyl-CoA to the synthesis of either ATP or GTP and thus represents the only step of substrate-level phosphorylation in the TCA. The beta subunit provides nucleotide specificity of the enzyme and binds the substrate succinate, while the binding sites for coenzyme A and phosphate are found in the alpha subunit. The polypeptide is Succinate--CoA ligase [ADP-forming] subunit beta (Idiomarina loihiensis (strain ATCC BAA-735 / DSM 15497 / L2-TR)).